The chain runs to 336 residues: Holliday junction branch migration complex subunit RuvB (336 aa).

Residues 1-182 (MKERIVNLET…FGMSFRMQFY (182 aa)) form a large ATPase domain (RuvB-L) region. Residues Leu21, Arg22, Gly63, Lys66, Thr67, Ser68, 129-131 (EDF), Arg172, Tyr182, and Arg219 contribute to the ATP site. Thr67 contributes to the Mg(2+) binding site. The interval 183 to 253 (SPSELALIIK…ITLHALNELG (71 aa)) is small ATPAse domain (RuvB-S). The interval 256–336 (ELGFDEADLA…IPTLNPQTLF (81 aa)) is head domain (RuvB-H). Residues Arg310 and Arg315 each coordinate DNA.

It belongs to the RuvB family. Homohexamer. Forms an RuvA(8)-RuvB(12)-Holliday junction (HJ) complex. HJ DNA is sandwiched between 2 RuvA tetramers; dsDNA enters through RuvA and exits via RuvB. An RuvB hexamer assembles on each DNA strand where it exits the tetramer. Each RuvB hexamer is contacted by two RuvA subunits (via domain III) on 2 adjacent RuvB subunits; this complex drives branch migration. In the full resolvosome a probable DNA-RuvA(4)-RuvB(12)-RuvC(2) complex forms which resolves the HJ.

It localises to the cytoplasm. It catalyses the reaction ATP + H2O = ADP + phosphate + H(+). The RuvA-RuvB-RuvC complex processes Holliday junction (HJ) DNA during genetic recombination and DNA repair, while the RuvA-RuvB complex plays an important role in the rescue of blocked DNA replication forks via replication fork reversal (RFR). RuvA specifically binds to HJ cruciform DNA, conferring on it an open structure. The RuvB hexamer acts as an ATP-dependent pump, pulling dsDNA into and through the RuvAB complex. RuvB forms 2 homohexamers on either side of HJ DNA bound by 1 or 2 RuvA tetramers; 4 subunits per hexamer contact DNA at a time. Coordinated motions by a converter formed by DNA-disengaged RuvB subunits stimulates ATP hydrolysis and nucleotide exchange. Immobilization of the converter enables RuvB to convert the ATP-contained energy into a lever motion, pulling 2 nucleotides of DNA out of the RuvA tetramer per ATP hydrolyzed, thus driving DNA branch migration. The RuvB motors rotate together with the DNA substrate, which together with the progressing nucleotide cycle form the mechanistic basis for DNA recombination by continuous HJ branch migration. Branch migration allows RuvC to scan DNA until it finds its consensus sequence, where it cleaves and resolves cruciform DNA. The protein is Holliday junction branch migration complex subunit RuvB of Helicobacter pylori (strain Shi470).